The sequence spans 150 residues: CASP-like protein 2 (150 aa).

The Cytoplasmic segment spans residues 1-17 (MKPEAGDGRSGWRWVAT). Residues 18–38 (FDLILRLAAIVATSTAVLAAM) traverse the membrane as a helical segment. Topologically, residues 39 to 41 (GKT) are extracellular. A helical transmembrane segment spans residues 42-62 (FVVVVNGVACFYLLMSLPVSI). The Cytoplasmic portion of the chain corresponds to 63-82 (FNIMRPGACPANRAVLTALD). Residues 83–103 (MVTVALVTAGALVAGILYLVH) form a helical membrane-spanning segment. Residues 104–121 (KAGDTHADWFSIWSQLDS) are Extracellular-facing. Residues 122–142 (LSYLAVLALILHVLLSGSILY) traverse the membrane as a helical segment. The Cytoplasmic segment spans residues 143 to 150 (KQALNIMF).

It belongs to the Casparian strip membrane proteins (CASP) family. Homodimer and heterodimers.

It localises to the cell membrane. This chain is CASP-like protein 2, found in Picea sitchensis (Sitka spruce).